Here is a 411-residue protein sequence, read N- to C-terminus: Putative competence-damage inducible protein (411 aa).

The protein belongs to the CinA family.

The sequence is that of Putative competence-damage inducible protein from Clostridium acetobutylicum (strain ATCC 824 / DSM 792 / JCM 1419 / IAM 19013 / LMG 5710 / NBRC 13948 / NRRL B-527 / VKM B-1787 / 2291 / W).